Reading from the N-terminus, the 237-residue chain is Myb-related protein MYBAS1 (237 aa).

2 consecutive HTH myb-type domains span residues 5–57 (REEM…VNYL) and 58–112 (HPGL…RKKA). The H-T-H motif DNA-binding region spans 33 to 57 (WDFVAKVSGLNRTGKSCRLRWVNYL). The Bipartite nuclear localization signal 1 motif lies at 62 to 65 (KHGR). The H-T-H motif DNA-binding region spans 85 to 108 (WSRIARRLPGRTDNEIKNYWRTHM). The Bipartite nuclear localization signal 2 motif lies at 109–117 (RKKAQERRG).

The protein resides in the nucleus. Its function is as follows. Transcription factor. This chain is Myb-related protein MYBAS1 (MYBAS1), found in Oryza sativa subsp. japonica (Rice).